The sequence spans 341 residues: Serpentine receptor class epsilon-12 (341 aa).

Helical transmembrane passes span 30–50, 57–77, 101–121, 140–160, 167–187, 230–250, and 262–282; these read TAFY…LFSA, FTLV…AIIV, AMTF…FSIL, YISY…AILL, IFVV…NQFL, LNFI…SVLF, and ICSL…PQIM.

This sequence belongs to the nematode receptor-like protein sre family.

It is found in the membrane. This Caenorhabditis elegans protein is Serpentine receptor class epsilon-12 (sre-12).